A 57-amino-acid polypeptide reads, in one-letter code: Ribulose bisphosphate carboxylase large chain (57 aa).

A propeptide spanning residues 1–2 (MS) is cleaved from the precursor. Proline 3 carries the N-acetylproline modification. Lysine 14 is subject to N6,N6,N6-trimethyllysine.

This sequence belongs to the RuBisCO large chain family. Type I subfamily. In terms of assembly, heterohexadecamer of 8 large chains and 8 small chains.

It localises to the plastid. It is found in the chloroplast. It catalyses the reaction 2 (2R)-3-phosphoglycerate + 2 H(+) = D-ribulose 1,5-bisphosphate + CO2 + H2O. The catalysed reaction is D-ribulose 1,5-bisphosphate + O2 = 2-phosphoglycolate + (2R)-3-phosphoglycerate + 2 H(+). In terms of biological role, ruBisCO catalyzes two reactions: the carboxylation of D-ribulose 1,5-bisphosphate, the primary event in carbon dioxide fixation, as well as the oxidative fragmentation of the pentose substrate in the photorespiration process. Both reactions occur simultaneously and in competition at the same active site. This Buxus sempervirens (Common box) protein is Ribulose bisphosphate carboxylase large chain (rbcL).